The following is a 277-amino-acid chain: Insulin-induced gene 1 protein (277 aa).

At 1 to 84 (MPRLHDHFWS…PYPNTWHHRL (84 aa)) the chain is on the cytoplasmic side. Over residues 51–66 (HGAPDADPAPRGRSAA) the composition is skewed to low complexity. Positions 51–73 (HGAPDADPAPRGRSAAMSGPEPG) are disordered. A helical transmembrane segment spans residues 85–107 (LQRSLVLFSVGVVLALVLNLLQI). Topologically, residues 108 to 126 (QRNVTLFPEEVIATIFSSA) are lumenal. A helical membrane pass occupies residues 127 to 144 (WWVPPCCGTAAAVVGLLY). Residues 145-159 (PCIDSHLGEPHKFKR) lie on the Cytoplasmic side of the membrane. Glycyl lysine isopeptide (Lys-Gly) (interchain with G-Cter in ubiquitin) cross-links involve residues K156 and K158. The helical transmembrane segment at 160 to 182 (EWASVMRCIAVFVGINHASAKLD) threads the bilayer. The Lumenal segment spans residues 183–185 (FAN). Residues 186-204 (NVQLSLTLAALSLGLWWTF) traverse the membrane as a helical segment. Residues 205 to 209 (DRSRS) lie on the Cytoplasmic side of the membrane. The residue at position 207 (S207) is a Phosphoserine; by PCK1. A helical transmembrane segment spans residues 210–231 (GLGLGITIAFLATLITQFLVYN). The Lumenal segment spans residues 232 to 245 (GVYQYTSPDFLYIR). The chain crosses the membrane as a helical span at residues 246 to 263 (SWLPCIFFSGGVTVGNIG). Over 264 to 277 (RQLAMGVPEKPHSD) the chain is Cytoplasmic. Positions 271–277 (PEKPHSD) match the KxHxx motif.

It belongs to the INSIG family. In terms of assembly, interacts with SCAP; interaction is direct and only takes place in the presence of sterols; it prevents interaction between SCAP and the coat protein complex II (COPII). Associates with the SCAP-SREBP complex (composed of SCAP and SREBF1/SREBP1 or SREBF2/SREBP2); association is mediated via its interaction with SCAP and only takes place in the presence of sterols. Interaction with SCAP is mutually exclusive with PAQR3. Interacts with HMGCR (via its SSD); the interaction, accelerated by sterols, leads to the recruitment of HMGCR to AMFR/gp78 for its ubiquitination by the sterol-mediated ERAD pathway. Interacts with AMFR/gp78 (via its membrane domain); the interaction recruits HMCR at the ER membrane for its ubiquitination and degradation by the sterol-mediated ERAD pathway. Interacts with SOAT2/ACAT2; leading to promote recruitment of AMFR/gp78 and subsequent ubiquitination of SOAT2/ACAT2. Interacts with RNF139. Interacts with RNF145. Post-translationally, phosphorylation at Ser-207 by PCK1 reduces binding to oxysterol, disrupting the interaction between INSIG1 and SCAP, thereby promoting nuclear translocation of SREBP proteins (SREBF1/SREBP1 or SREBF2/SREBP2) and subsequent transcription of downstream lipogenesis-related genes. In terms of processing, ubiquitinated by AMFR/gp78 in response to sterol deprivation, leading to its degradation: when the SCAP-SREBP complex becomes dissociated from INSIG1, INSIG1 is then ubiquitinated and degraded in proteasomes. Although ubiquitination is required for rapid INSIG1 degradation, it is not required for release of the SCAP-SREBP complex. Ubiquitinated by RNF139. Expressed in all tissues tested with highest expression in the liver.

Its subcellular location is the endoplasmic reticulum membrane. In terms of biological role, oxysterol-binding protein that mediates feedback control of cholesterol synthesis by controlling both endoplasmic reticulum to Golgi transport of SCAP and degradation of HMGCR. Acts as a negative regulator of cholesterol biosynthesis by mediating the retention of the SCAP-SREBP complex in the endoplasmic reticulum, thereby blocking the processing of sterol regulatory element-binding proteins (SREBPs) SREBF1/SREBP1 and SREBF2/SREBP2. Binds oxysterol, including 25-hydroxycholesterol, regulating interaction with SCAP and retention of the SCAP-SREBP complex in the endoplasmic reticulum. In presence of oxysterol, interacts with SCAP, retaining the SCAP-SREBP complex in the endoplasmic reticulum, thereby preventing SCAP from escorting SREBF1/SREBP1 and SREBF2/SREBP2 to the Golgi. Sterol deprivation or phosphorylation by PCK1 reduce oxysterol-binding, disrupting the interaction between INSIG1 and SCAP, thereby promoting Golgi transport of the SCAP-SREBP complex, followed by processing and nuclear translocation of SREBF1/SREBP1 and SREBF2/SREBP2. Also regulates cholesterol synthesis by regulating degradation of HMGCR: initiates the sterol-mediated ubiquitin-mediated endoplasmic reticulum-associated degradation (ERAD) of HMGCR via recruitment of the reductase to the ubiquitin ligases AMFR/gp78 and/or RNF139. Also regulates degradation of SOAT2/ACAT2 when the lipid levels are low: initiates the ubiquitin-mediated degradation of SOAT2/ACAT2 via recruitment of the ubiquitin ligases AMFR/gp78. The chain is Insulin-induced gene 1 protein from Homo sapiens (Human).